The sequence spans 739 residues: NAD(P)H-quinone oxidoreductase subunit 5, chloroplastic (739 aa).

16 helical membrane-spanning segments follow: residues 9–29 (WVIP…LFFI), 39–59 (IWAF…VQLS), 89–109 (IDPL…LVLI), 125–145 (FVYI…SNLI), 147–167 (IYFF…FWFT), 185–205 (GDFG…SLEF), 219–239 (NGIN…GAVA), 258–278 (TPIS…FLLA), 280–300 (LLPL…VGTI), 327–347 (LGYM…FHLI), 354–374 (ALLF…VGYS), 396–416 (STFL…CFWS), 425–445 (WLYS…TAFY), 542–562 (LFPL…GISF), 610–630 (SLAI…YSFF), and 719–739 (ISSY…FFLF).

Belongs to the complex I subunit 5 family. In terms of assembly, NDH is composed of at least 16 different subunits, 5 of which are encoded in the nucleus.

It localises to the plastid. The protein localises to the chloroplast thylakoid membrane. The enzyme catalyses a plastoquinone + NADH + (n+1) H(+)(in) = a plastoquinol + NAD(+) + n H(+)(out). The catalysed reaction is a plastoquinone + NADPH + (n+1) H(+)(in) = a plastoquinol + NADP(+) + n H(+)(out). NDH shuttles electrons from NAD(P)H:plastoquinone, via FMN and iron-sulfur (Fe-S) centers, to quinones in the photosynthetic chain and possibly in a chloroplast respiratory chain. The immediate electron acceptor for the enzyme in this species is believed to be plastoquinone. Couples the redox reaction to proton translocation, and thus conserves the redox energy in a proton gradient. In Agrostis stolonifera (Creeping bentgrass), this protein is NAD(P)H-quinone oxidoreductase subunit 5, chloroplastic (ndhF).